The sequence spans 38 residues: L-amino-acid oxidase (38 aa).

Belongs to the flavin monoamine oxidase family. FIG1 subfamily. As to quaternary structure, homodimer; non-covalently linked. The cofactor is FAD. In terms of processing, N-glycosylated. As to expression, expressed by the venom gland.

It localises to the secreted. The catalysed reaction is an L-alpha-amino acid + O2 + H2O = a 2-oxocarboxylate + H2O2 + NH4(+). The enzyme catalyses L-leucine + O2 + H2O = 4-methyl-2-oxopentanoate + H2O2 + NH4(+). It catalyses the reaction L-phenylalanine + O2 + H2O = 3-phenylpyruvate + H2O2 + NH4(+). It carries out the reaction L-tryptophan + O2 + H2O = indole-3-pyruvate + H2O2 + NH4(+). The catalysed reaction is L-methionine + O2 + H2O = 4-methylsulfanyl-2-oxobutanoate + H2O2 + NH4(+). The enzyme catalyses L-arginine + O2 + H2O = 5-guanidino-2-oxopentanoate + H2O2 + NH4(+). It catalyses the reaction L-2-aminohexanoate + O2 + H2O = 2-oxohexanoate + H2O2 + NH4(+). It carries out the reaction L-2-aminopentanoate + O2 + H2O = 2-oxopentanoate + H2O2 + NH4(+). The catalysed reaction is L-tyrosine + O2 + H2O = 3-(4-hydroxyphenyl)pyruvate + H2O2 + NH4(+). Its function is as follows. Catalyzes an oxidative deamination of predominantly hydrophobic and aromatic L-amino acids, thus producing hydrogen peroxide that may contribute to the diverse toxic effects of this enzyme. Is very active against L-Phe and L-Tyr, moderately active against L-Trp, L-Met, L-Leu, L-norleucine (L-2-aminohexanoate), L-Arg and L-norvaline (L-2-aminopentanoate), and slightly active against L-His, L-cystine, and L-Ile. L-Gln, L-Lys, L-Asn, L-ornithine, L-Ala and L-Val are oxidized very slowly. Exhibits diverse biological activities, such as hemorrhage, hemolysis, edema, apoptosis of vascular endothelial cells or tumor cell lines, antibacterial and antiparasitic activities. This protein inhibits both agonist- and shear stress-induced platelet aggregation (SIPA). Effects of snake L-amino oxidases on platelets are controversial, since they either induce aggregation or inhibit agonist-induced aggregation. These different effects are probably due to different experimental conditions. The chain is L-amino-acid oxidase from Naja kaouthia (Monocled cobra).